A 539-amino-acid chain; its full sequence is Glycerophosphoinositol inositolphosphodiesterase GDPD2 (539 aa).

The Cytoplasmic portion of the chain corresponds to 1-38; sequence MAESPGCCSVWARCLHCLYSCHWRKCPRERMQTSKCDC. Residues 39-59 traverse the membrane as a helical segment; it reads IWFGLLFLTFLLSLSWLYIGL. Over 60 to 85 the chain is Extracellular; the sequence is VLLNDLHNFNEFLFRRWGHWMDWSLA. The chain crosses the membrane as a helical span at residues 86 to 106; it reads FLLVISLLVTYASLLLVLALL. Topologically, residues 107–121 are cytoplasmic; the sequence is LRLCRQPLHLHSLHK. The helical transmembrane segment at 122 to 142 threads the bilayer; sequence VLLLLIMLLVAAGLVGLDIQW. The Extracellular portion of the chain corresponds to 143–154; that stretch reads QQEWHSLRVSLQ. A helical membrane pass occupies residues 155 to 175; it reads ATAPFLHIGAAAGIALLAWPV. The Cytoplasmic segment spans residues 176 to 188; the sequence is ADTFYRIHRRGPK. Residues 189 to 209 traverse the membrane as a helical segment; that stretch reads ILLLLLFFGVVLVIYLAPLCI. The Extracellular segment spans residues 210 to 490; sequence SSPCIMEPRD…PIWLITPQTY (281 aa). The 256-residue stretch at 224 to 479 folds into the GP-PDE domain; sequence PGLVGHRGAP…NDCQLLQQMR (256 aa). Glutamate 256, aspartate 258, and histidine 271 together coordinate a divalent metal cation. An N-linked (GlcNAc...) asparagine glycan is attached at asparagine 442. A helical membrane pass occupies residues 491-511; sequence LIIWVITNCVSTMLLLWTFLL. Residues 512–539 are Cytoplasmic-facing; it reads QRRFVKKRGKTGLETAVLLTRINNFMME.

This sequence belongs to the glycerophosphoryl diester phosphodiesterase family. Ca(2+) serves as cofactor.

The protein resides in the cell membrane. It localises to the cytoplasm. The protein localises to the cytoskeleton. It carries out the reaction sn-glycero-3-phospho-1D-myo-inositol + H2O = 1D-myo-inositol 1-phosphate + glycerol + H(+). Functionally, has glycerophosphoinositol inositolphosphodiesterase activity and specifically hydrolyzes glycerophosphoinositol, with no activity for other substrates such as glycerophosphoinositol 4-phosphate, glycerophosphocholine, glycerophosphoethanolamine, and glycerophosphoserine. Accelerates the program of osteoblast differentiation and growth. May play a role in remodeling of the actin cytoskeleton. This Homo sapiens (Human) protein is Glycerophosphoinositol inositolphosphodiesterase GDPD2 (GDPD2).